A 351-amino-acid polypeptide reads, in one-letter code: Holliday junction branch migration complex subunit RuvB (351 aa).

The tract at residues 1–186 is large ATPase domain (RuvB-L); that stretch reads MDEKIETRLI…FGIVQRLEFY (186 aa). ATP contacts are provided by residues I25, R26, G67, K70, T71, T72, 133-135, R176, Y186, and R223; that span reads EDF. T71 is a Mg(2+) binding site. Positions 187–257 are small ATPAse domain (RuvB-S); that stretch reads RIPDLIHIVK…IAKEALDLLN (71 aa). Residues 260–351 form a head domain (RuvB-H) region; the sequence is IRGLDVMDRK…ENFDLLGKVE (92 aa). R296, R315, and R320 together coordinate DNA.

It belongs to the RuvB family. In terms of assembly, homohexamer. Forms an RuvA(8)-RuvB(12)-Holliday junction (HJ) complex. HJ DNA is sandwiched between 2 RuvA tetramers; dsDNA enters through RuvA and exits via RuvB. An RuvB hexamer assembles on each DNA strand where it exits the tetramer. Each RuvB hexamer is contacted by two RuvA subunits (via domain III) on 2 adjacent RuvB subunits; this complex drives branch migration. In the full resolvosome a probable DNA-RuvA(4)-RuvB(12)-RuvC(2) complex forms which resolves the HJ.

Its subcellular location is the cytoplasm. It catalyses the reaction ATP + H2O = ADP + phosphate + H(+). Functionally, the RuvA-RuvB-RuvC complex processes Holliday junction (HJ) DNA during genetic recombination and DNA repair, while the RuvA-RuvB complex plays an important role in the rescue of blocked DNA replication forks via replication fork reversal (RFR). RuvA specifically binds to HJ cruciform DNA, conferring on it an open structure. The RuvB hexamer acts as an ATP-dependent pump, pulling dsDNA into and through the RuvAB complex. RuvB forms 2 homohexamers on either side of HJ DNA bound by 1 or 2 RuvA tetramers; 4 subunits per hexamer contact DNA at a time. Coordinated motions by a converter formed by DNA-disengaged RuvB subunits stimulates ATP hydrolysis and nucleotide exchange. Immobilization of the converter enables RuvB to convert the ATP-contained energy into a lever motion, pulling 2 nucleotides of DNA out of the RuvA tetramer per ATP hydrolyzed, thus driving DNA branch migration. The RuvB motors rotate together with the DNA substrate, which together with the progressing nucleotide cycle form the mechanistic basis for DNA recombination by continuous HJ branch migration. Branch migration allows RuvC to scan DNA until it finds its consensus sequence, where it cleaves and resolves cruciform DNA. The sequence is that of Holliday junction branch migration complex subunit RuvB from Coxiella burnetii (strain RSA 331 / Henzerling II).